The following is a 362-amino-acid chain: Histidinol-phosphate aminotransferase (362 aa).

K218 is modified (N6-(pyridoxal phosphate)lysine).

The protein belongs to the class-II pyridoxal-phosphate-dependent aminotransferase family. Histidinol-phosphate aminotransferase subfamily. As to quaternary structure, homodimer. Requires pyridoxal 5'-phosphate as cofactor.

The catalysed reaction is L-histidinol phosphate + 2-oxoglutarate = 3-(imidazol-4-yl)-2-oxopropyl phosphate + L-glutamate. It participates in amino-acid biosynthesis; L-histidine biosynthesis; L-histidine from 5-phospho-alpha-D-ribose 1-diphosphate: step 7/9. The protein is Histidinol-phosphate aminotransferase of Xanthomonas campestris pv. campestris (strain B100).